The primary structure comprises 148 residues: UPF0178 protein CA_C2825 (148 aa).

Belongs to the UPF0178 family.

This Clostridium acetobutylicum (strain ATCC 824 / DSM 792 / JCM 1419 / IAM 19013 / LMG 5710 / NBRC 13948 / NRRL B-527 / VKM B-1787 / 2291 / W) protein is UPF0178 protein CA_C2825.